A 231-amino-acid chain; its full sequence is LexA repressor (231 aa).

The H-T-H motif DNA-binding region spans 26 to 46 (FEEMKEALDLKSKSGIHRLIG). Residues S152 and K190 each act as for autocatalytic cleavage activity in the active site.

It belongs to the peptidase S24 family. In terms of assembly, homodimer.

It carries out the reaction Hydrolysis of Ala-|-Gly bond in repressor LexA.. Represses a number of genes involved in the response to DNA damage (SOS response), including recA and lexA. In the presence of single-stranded DNA, RecA interacts with LexA causing an autocatalytic cleavage which disrupts the DNA-binding part of LexA, leading to derepression of the SOS regulon and eventually DNA repair. This Acidiphilium cryptum (strain JF-5) protein is LexA repressor.